The following is a 184-amino-acid chain: Acetyl-CoA decarbonylase/synthase complex subunit epsilon 1 (184 aa).

The protein belongs to the CdhB family. In terms of assembly, heterotetramer of two alpha and two epsilon subunits. The ACDS complex is made up of alpha, epsilon, beta, gamma and delta subunits with a probable stoichiometry of (alpha(2)epsilon(2))(4)-beta(8)-(gamma(1)delta(1))(8).

In terms of biological role, part of a complex that catalyzes the reversible cleavage of acetyl-CoA, allowing autotrophic growth from CO(2). The alpha-epsilon subcomponent functions as a carbon monoxide dehydrogenase. The precise role of the epsilon subunit is unclear; it may have a stabilizing role within the alpha(2)epsilon(2) component and/or be involved in electron transfer to FAD during a potential FAD-mediated CO oxidation. The protein is Acetyl-CoA decarbonylase/synthase complex subunit epsilon 1 (cdhB1) of Archaeoglobus fulgidus (strain ATCC 49558 / DSM 4304 / JCM 9628 / NBRC 100126 / VC-16).